Consider the following 217-residue polypeptide: Very-long-chain (3R)-3-hydroxyacyl-CoA dehydratase PHS1 (217 aa).

Topologically, residues 1-11 are cytoplasmic; that stretch reads MSKKLASPLSF. A helical membrane pass occupies residues 12–29; that stretch reads LPLYNLLSAVGWSYLLYL. Residues 30-47 lie on the Lumenal side of the membrane; that stretch reads VISLYPKVGQPAFFYQTK. Residues 48–66 form a helical membrane-spanning segment; the sequence is NVATLVQCGAIIEIINSFL. Over 67-76 the chain is Cytoplasmic; that stretch reads GVVRSPLLTT. Residues 77-94 form a helical membrane-spanning segment; the sequence is VAQVSSRLLVVLGIFQLL. At 95 to 99 the chain is on the lumenal side; sequence PNTSG. The helical transmembrane segment at 100-117 threads the bilayer; the sequence is VQSVVYISLLLAWSITEI. The Cytoplasmic portion of the chain corresponds to 118 to 142; it reads VRYLYYFFMLVFKNGAPKILILLRY. Residues 143–160 form a helical membrane-spanning segment; it reads NLFWILYPTGVASELRII. Residues Tyr149 and Glu156 contribute to the active site. At 161–178 the chain is on the lumenal side; that stretch reads YCALNAAESQYSLLYKRI. The chain crosses the membrane as a helical span at residues 179 to 196; it reads LIAAMLAYIPGFPMLFLH. The Cytoplasmic segment spans residues 197–217; it reads MVAQRKKVMKSLRSSFGKKLI. The short motif at 214 to 217 is the Endoplasmic reticulum retention signal element; it reads KKLI.

It belongs to the very long-chain fatty acids dehydratase HACD family.

It localises to the endoplasmic reticulum membrane. It is found in the vacuole membrane. It carries out the reaction a very-long-chain (3R)-3-hydroxyacyl-CoA = a very-long-chain (2E)-enoyl-CoA + H2O. The catalysed reaction is (3R)-hydroxyeicosanoyl-CoA = (2E)-eicosenoyl-CoA + H2O. The enzyme catalyses (3R)-hydroxydocosanoyl-CoA = (2E)-docosenoyl-CoA + H2O. It catalyses the reaction (3R)-hydroxyoctadecanoyl-CoA = (2E)-octadecenoyl-CoA + H2O. It carries out the reaction (3R)-hydroxytetracosanoyl-CoA = (2E)-tetracosenoyl-CoA + H2O. The catalysed reaction is (3R)-hydroxyhexacosanoyl-CoA = (2E)-hexacosenoyl-CoA + H2O. The enzyme catalyses (3R)-hydroxyhexadecanoyl-CoA = (2E)-hexadecenoyl-CoA + H2O. The protein operates within lipid metabolism; fatty acid biosynthesis. Catalyzes the third of the four reactions of the long-chain fatty acids elongation cycle. This endoplasmic reticulum-bound enzymatic process, allows the addition of two carbons to the chain of long- and very long-chain fatty acids/VLCFAs per cycle. This enzyme catalyzes the dehydration of the 3-hydroxyacyl-CoA intermediate into trans-2,3-enoyl-CoA, within each cycle of fatty acid elongation. Thereby, it participates in the production of VLCFAs of different chain lengths that are involved in multiple biological processes as precursors of membrane lipids and lipid mediators. In Saccharomyces cerevisiae (strain ATCC 204508 / S288c) (Baker's yeast), this protein is Very-long-chain (3R)-3-hydroxyacyl-CoA dehydratase PHS1 (PHS1).